The chain runs to 376 residues: MIRTNFLLKQARRHESKDKSSKRHKSEEHNDKEHSSDKGRERLNSSENGEDRHKRKERKSSRGRSHSRSRSRERRHRSRSRERKKSRSRSRDRKKSRSRSRDRKKSRSRSRDRKRRIRTRSRSRSRHRHRTRSRSRSRSRSRDRKKRIEKPRRFSRSLSRTPSPPPFRGRNTAMDAQEALARRLERAKKLQEQREKEMVEKQKQQEMAAAAAATGGSVLNVAALLASGTQVTPQIAMAAQMAALQAKALAETGIAVPSYYNPAAVNPMKFAEQEKKRKMLWQGKKEGDKSQSAEIWEKLNFGNKDQNVKFRKLMGIKSEDEAGCSSVDEESYKTLKQQEEVFRNLDAQYEMARSQTHTQRGMGLGFTSSMRGMDTV.

A disordered region spans residues 1–171 (MIRTNFLLKQ…PSPPPFRGRN (171 aa)). Basic and acidic residues predominate over residues 13-52 (RHESKDKSSKRHKSEEHNDKEHSSDKGRERLNSSENGEDR). A Phosphoserine modification is found at S45. Residues 53-155 (HKRKERKSSR…KRIEKPRRFS (103 aa)) show a composition bias toward basic residues. Residues 171-214 (NTAMDAQEALARRLERAKKLQEQREKEMVEKQKQQEMAAAAAAT) adopt a coiled-coil conformation. Residue K317 forms a Glycyl lysine isopeptide (Lys-Gly) (interchain with G-Cter in SUMO1); alternate linkage. K317 is covalently cross-linked (Glycyl lysine isopeptide (Lys-Gly) (interchain with G-Cter in SUMO2); alternate). S318 is subject to Phosphoserine.

This sequence belongs to the RSRC2 family.

This Rattus norvegicus (Rat) protein is Arginine/serine-rich coiled-coil protein 2 (Rsrc2).